We begin with the raw amino-acid sequence, 319 residues long: MATTKPYRVLLYYMYTTIENPEEFAAEHLEFCNSLELKGRILVAKEGINGTCSGTVEQTEKYMEAMNNDPRFDGIVFKIDEEEGHAFKKMHVRPRPELVTLRLEDDINPHEITGKYLEPKDFYEAMKQEDTVIIDARNDYEFDLGHFKGAIKPDIESFRELPDWIRENKETLEGKKILTYCTGGIRCEKFSGWLVREGYEDVSQLHGGIVTYGKDPEVQGELWDGQCYVFDERIAVPVNQKEHVIVGKDHFTGEPCERYVNCSNPECNKKILCSEENEAKYLRACSHKCRVSPRNRYVIQHELTEEQVAAALEKIEAGK.

Residues 127–221 (KQEDTVIIDA…YGKDPEVQGE (95 aa)) form the Rhodanese domain. The active-site Cysteine persulfide intermediate is Cys181.

The protein belongs to the TrhO family.

It carries out the reaction uridine(34) in tRNA + AH2 + O2 = 5-hydroxyuridine(34) in tRNA + A + H2O. Functionally, catalyzes oxygen-dependent 5-hydroxyuridine (ho5U) modification at position 34 in tRNAs. The polypeptide is tRNA uridine(34) hydroxylase (Bacillus cereus (strain G9842)).